Here is a 180-residue protein sequence, read N- to C-terminus: Oligoribonuclease (180 aa).

An Exonuclease domain is found at 7–170 (LIWIDLEMTG…DDIRESIAEL (164 aa)). Tyr128 is an active-site residue.

Belongs to the oligoribonuclease family.

The protein resides in the cytoplasm. 3'-to-5' exoribonuclease specific for small oligoribonucleotides. The sequence is that of Oligoribonuclease from Pseudomonas aeruginosa (strain UCBPP-PA14).